A 268-amino-acid polypeptide reads, in one-letter code: MKYAVIGDPVSHSLSPVMHQVNFKSLNMEDTYEALHIPTQDFHDIRHIIEDNHINGFNVTIPHKERIIPYLDEINDQAKAVGAVNTVKIINNKWIGYNTDGIGYVMGLKQVYPDLENAYVLILGAGGASKGIANELSKIVQPKLTIANRTMSRFETWDMDINAISLEQSEQYLDEFDIIINTTSAGLNNNDDIVISLDNLSSSTLVSDIIYIPYKTKFLKEAEFKGNTVYNGLDMFINQGAESFKIWTGKQPNILEMKYAVLNKLKGV.

Shikimate is bound by residues 13 to 15 (SLS) and threonine 60. Lysine 64 acts as the Proton acceptor in catalysis. Aspartate 76 is an NADP(+) binding site. Positions 85 and 100 each coordinate shikimate. NADP(+) is bound by residues 124-128 (GAGGA), 148-153 (NRTMSR), and isoleucine 209. Shikimate is bound at residue tyrosine 211. Glycine 232 contributes to the NADP(+) binding site.

Belongs to the shikimate dehydrogenase family. In terms of assembly, homodimer.

The enzyme catalyses shikimate + NADP(+) = 3-dehydroshikimate + NADPH + H(+). It functions in the pathway metabolic intermediate biosynthesis; chorismate biosynthesis; chorismate from D-erythrose 4-phosphate and phosphoenolpyruvate: step 4/7. Functionally, involved in the biosynthesis of the chorismate, which leads to the biosynthesis of aromatic amino acids. Catalyzes the reversible NADPH linked reduction of 3-dehydroshikimate (DHSA) to yield shikimate (SA). This chain is Shikimate dehydrogenase (NADP(+)), found in Staphylococcus haemolyticus (strain JCSC1435).